The chain runs to 475 residues: Luvungin A synthase CYP716AC1 (475 aa).

Residues Phe-3 to Ile-23 traverse the membrane as a helical segment. Cys-423 is a binding site for heme.

This sequence belongs to the cytochrome P450 family. Heme is required as a cofactor. In terms of tissue distribution, expressed in flowers, maturing fruits and in juice vesicles.

Its subcellular location is the membrane. The enzyme catalyses (21S)-21-acetoxyl-apo-melianone + reduced [NADPH--hemoprotein reductase] + O2 = luvungin A + oxidized [NADPH--hemoprotein reductase] + H2O + H(+). Its pathway is secondary metabolite biosynthesis; terpenoid biosynthesis. In terms of biological role, monooxygenase involved in the biosynthesis of limonoids triterpene natural products such as limonin, a compound with insecticidal activity responsible for the bitter taste in citrus. Catalyzes the conversion of (21S)-21-acetoxyl-apo-melianone to luvungin A. This is Luvungin A synthase CYP716AC1 from Citrus sinensis (Sweet orange).